The following is a 115-amino-acid chain: U3-lycotoxin-Ls1k (115 aa).

Residues 1-20 form the signal peptide; sequence MKFELLFGVLLVTLFSYSSA. A propeptide spanning residues 21 to 44 is cleaved from the precursor; sequence EMLDDFDQADEDELLSLIEKEEAR. Disulfide bonds link C48-C63, C55-C72, C62-C87, and C74-C85.

The protein belongs to the neurotoxin 19 (CSTX) family. 01 subfamily. Expressed by the venom gland.

It is found in the secreted. The polypeptide is U3-lycotoxin-Ls1k (Lycosa singoriensis (Wolf spider)).